Here is a 293-residue protein sequence, read N- to C-terminus: Dioxygenase cdmA (293 aa).

Fe cation contacts are provided by histidine 135, aspartate 137, and histidine 212.

The protein belongs to the PhyH family. As to quaternary structure, homodimer. Fe cation is required as a cofactor.

The enzyme catalyses chrodrimanin C + 2-oxoglutarate + O2 = verruculide A + succinate + CO2 + H2O. It carries out the reaction chrodrimanin H + 2-oxoglutarate + O2 = chrodrimanin E + succinate + CO2 + H2O. The protein operates within secondary metabolite biosynthesis; terpenoid biosynthesis. Its function is as follows. Dioxygenase; part of the gene cluster that mediates the biosynthesis of chrodrimanin B, a meroterpenoid that acts as a potent blocker of insect GABA-gated chloride channels. The first step of the pathway is the biosynthesis of 6-hydroxymellein by the polyketide synthase cdmE. The prenyltransferase cdmH acts as a 6-hydroxymellein 5-farnesyltransferase and produces the hydrophobic metabolite verruculide C. The FAD-dependent monooxygenase cdmI further converts verruculide C into verruculide B. The terpene cyclase cdmG then produced the pentacyclic molecule 3-hydroxypentacecilide A, the backbone structure of chrodrimanin B, via folding the farnesyl moiety of the substrate into the chair-boat conformation. The short-chain dehydrogenase/reductase cdmF functions as the 3-OH dehydrogenase that oxidizes the C-3 hydroxyl group of 3-hydroxypentacecilide A and produces chrodrimanin C, the dehydrogenated product of 3-hydroxypentacecilide A. The cytochrome P450 monooxygenase cdmJ then accepts both 3-hydroxypentacecilide A and chrodrimanin C and functions as a C-7-beta-hydroxylase to produce respectively chrodrimanin H and chrodrimanin F. The dioxygenase cdmA accepts chrodrimanin H to afford chrodrimanin E, which is further transformed to chrodrimanin A by the dioxygenase cdmD. CdmA can also accept chrodrimanin C as substrate to convert it into verruculide A, which is further converted into chrodrimanin T by cdmD. The last step of the biosynthesis is proposed to be performed by the acetyltransferase cdmC which acetylates chrodrimanin A to yield chrodrimanin B. The pathway may also lead to the production of additional shunt products, including chrodrimanins T and U. This is Dioxygenase cdmA from Talaromyces verruculosus (Penicillium verruculosum).